A 646-amino-acid polypeptide reads, in one-letter code: Peptidylprolyl isomerase domain and WD repeat-containing protein 1 (646 aa).

Residues 1 to 50 (MATESGSDSQLRRRRRRDPEGSEKTELSEREPALAVAGSEENDDENEERW) form a disordered region. Ala-2 is modified (N-acetylalanine). Positions 17–32 (RDPEGSEKTELSEREP) are enriched in basic and acidic residues. WD repeat units lie at residues 88-126 (MHRDVITHVVCTKTDFIITASHDGHVKFWKKIEEGIEFV), 131-170 (SHLGVIESIAVSSEGALFCSVGDDKAMKVFDVVNFDMINM), 221-260 (LHVSPLTQIRLNPVYKAVVSSDKSGMIEYWTGPPHEYKFP), and 278-319 (KCKA…RVFD). The PPIase cyclophilin-type domain maps to 490-645 (VSDSAIVHTS…EDVSIINITV (156 aa)).

It belongs to the cyclophilin-type PPIase family. PPIL1 subfamily. In terms of assembly, identified in the spliceosome C complex.

Its subcellular location is the nucleus. The catalysed reaction is [protein]-peptidylproline (omega=180) = [protein]-peptidylproline (omega=0). With respect to regulation, inhibited by cyclosporin A (CsA). In terms of biological role, PPIase that catalyzes the cis-trans isomerization of proline imidic peptide bonds in oligopeptides and may therefore assist protein folding. May be involved in pre-mRNA splicing. This Mus musculus (Mouse) protein is Peptidylprolyl isomerase domain and WD repeat-containing protein 1.